Reading from the N-terminus, the 594-residue chain is Membrane protein insertase YidC (594 aa).

Residues 7 to 27 traverse the membrane as a helical segment; that stretch reads YFVAIALSVLILIAWQFFYVS. The interval 36–73 is disordered; the sequence is AAEQAQQAQQTQQQPGAQPAAPGQALPGGAIPSAGESR. A compositionally biased stretch (low complexity) spans 37–65; sequence AEQAQQAQQTQQQPGAQPAAPGQALPGGA. 4 helical membrane-spanning segments follow: residues 369 to 389, 443 to 463, 488 to 508, and 532 to 552; these read LFGNFGIAILITTIVVKLIFF, WPILIQIPVFFALYKVIYVTI, LFGLLPFEGPAFLHLGIWPII, and FTWMPVVFTFMLASFPAGLVI.

It belongs to the OXA1/ALB3/YidC family. Type 1 subfamily. In terms of assembly, interacts with the Sec translocase complex via SecD. Specifically interacts with transmembrane segments of nascent integral membrane proteins during membrane integration.

The protein localises to the cell inner membrane. Functionally, required for the insertion and/or proper folding and/or complex formation of integral membrane proteins into the membrane. Involved in integration of membrane proteins that insert both dependently and independently of the Sec translocase complex, as well as at least some lipoproteins. Aids folding of multispanning membrane proteins. The sequence is that of Membrane protein insertase YidC from Rhizobium meliloti (strain 1021) (Ensifer meliloti).